The primary structure comprises 678 residues: MKRRILITSALPYANGPIHLGHLVEYTQTDIWARYQRLRGHDCVYVCADDAHGTPIMLRAQSEGITPEELITRMHGDHLRDFTGFGIRFDLYHSTHSPENFEISQSIYRALRAADYINVREIEQAYDPVAGIFLPDRFIRGTCPRCGAADQYGDSCEVCGATYSPTDLINPVSAVSGAVPERRNSEHYFFQLGDFSDFLRRWIHSGTLQEEVAHKLDEWFSIGLSDWDISRDAPYFGIPIPDAPGKFFYVWLDALPGYMAATQHWCAAHGRNLADYWGPDSAAEIYHFIGKDIIYFHGLFWPAMLKGSGHRLPTGIFAHGHLTVNGAKMSKSRGTSITARQYLQHLNPEFLRYYIATKLNSHVEDIDLNLEDFLLRGNGDLVGKVVNLASRAAGFIHRSFAGRLAASLGKDQAFYDGLLQTQEAIGEAYAGREYGKAMRDIMALADQINAYVDQNAPWTLAKDPAQHESLHRVVTVTLNGFRVLITLLSPVLPELSRKALEFLQCELDWAGLSKPLLDHQILPYSHLLQRMEKTQVDALIQNPAESPATAPGTAAAPVPTPVPAEAREENPFIGIDDFSKVDLRIARIVAATNVDGADKLLHLTLDIGEGTRSVFAGIKSAYDPASLVGRLTVMVANLAPRKMRFGLSEGMVLAASGPEGGPFLLSPDSGAQPGMRVK.

The 'HIGH' region signature appears at 12–22 (PYANGPIHLGH). Residues Cys-143, Cys-146, Cys-156, and Cys-159 each coordinate Zn(2+). The short motif at 328 to 332 (KMSKS) is the 'KMSKS' region element. Lys-331 is a binding site for ATP. In terms of domain architecture, tRNA-binding spans 577–678 (DFSKVDLRIA…SGAQPGMRVK (102 aa)).

The protein belongs to the class-I aminoacyl-tRNA synthetase family. MetG type 1 subfamily. Homodimer. It depends on Zn(2+) as a cofactor.

It localises to the cytoplasm. The enzyme catalyses tRNA(Met) + L-methionine + ATP = L-methionyl-tRNA(Met) + AMP + diphosphate. Is required not only for elongation of protein synthesis but also for the initiation of all mRNA translation through initiator tRNA(fMet) aminoacylation. In Acidithiobacillus ferrooxidans (strain ATCC 23270 / DSM 14882 / CIP 104768 / NCIMB 8455) (Ferrobacillus ferrooxidans (strain ATCC 23270)), this protein is Methionine--tRNA ligase.